The following is a 496-amino-acid chain: L-carnitine dehydrogenase/betainyl-CoA thioesterase (496 aa).

Residues 1 to 335 form an L-carnitine dehydrogenase region; that stretch reads MTTITKAACI…KRLWEKGGSP (335 aa). Position 11–16 (11–16) interacts with NAD(+); the sequence is GGGVIG. The betainyl-CoA thioesterase stretch occupies residues 336–496; the sequence is SKSLDASGPL…GAGRHVGQKR (161 aa).

In the N-terminal section; belongs to the 3-hydroxyacyl-CoA dehydrogenase family. L-carnitine dehydrogenase subfamily. The protein in the C-terminal section; belongs to the betainyl-CoA thioesterase family. As to quaternary structure, homodimer.

The protein resides in the cytoplasm. The catalysed reaction is carnitine + NAD(+) = 3-dehydrocarnitine + NADH + H(+). It catalyses the reaction N,N,N-trimethylglycyl-CoA + H2O = glycine betaine + CoA + H(+). It functions in the pathway amine and polyamine metabolism; carnitine metabolism. Its function is as follows. Multifunctional enzyme that catalyzes the NAD(+)-dependent oxidation of L-carnitine to 3-dehydrocarnitine and the cleavage of betainyl-CoA (N,N,N-trimethylglycyl-CoA) into glycine betaine and coenzyme A. Can also hydrolyze L-carnitinyl-CoA, but with much lower efficiency. Is involved in a L-carnitine degradation pathway that allows R.meliloti to grow on L-carnitine as the sole source of carbon and nitrogen. The protein is L-carnitine dehydrogenase/betainyl-CoA thioesterase of Rhizobium meliloti (strain 1021) (Ensifer meliloti).